The primary structure comprises 483 residues: MFS-type transporter ppzB (483 aa).

The next 5 helical transmembrane spans lie at 18–38 (FILT…GILL), 62–82 (AFLA…GWAA), 96–116 (MFLV…LLVV), 149–169 (IGTI…LGGV), and 178–198 (AVFA…ALVI). Residue Asn219 is glycosylated (N-linked (GlcNAc...) asparagine). A run of 6 helical transmembrane segments spans residues 281-301 (LAML…ATVP), 310-330 (FSSL…FALG), 344-364 (AAAT…GLPE), 374-394 (VALF…VTSP), 424-444 (FGFS…LGGF), and 453-473 (VMGA…FLFV).

It belongs to the major facilitator superfamily. TCR/Tet family.

It localises to the membrane. MFS-type transporter; part of the gene cluster that mediates the biosynthesis of pyrrolopyrazines, secondary metabolites showing insecticidal activity. Probably involved in the secretion of peramine and other pyrrolopyrazines. In Metarhizium rileyi (strain RCEF 4871) (Nomuraea rileyi), this protein is MFS-type transporter ppzB.